The chain runs to 141 residues: Hemoglobin subunit alpha-1 (141 aa).

Residues 1 to 141 (VLTDEDKARV…LSKDLVSKYR (141 aa)) enclose the Globin domain. His58 contacts O2. Residue His87 coordinates heme b.

This sequence belongs to the globin family. As to quaternary structure, heterotetramer of two alpha chains and two beta chains. In terms of tissue distribution, red blood cells.

In terms of biological role, involved in oxygen transport from the lung to the various peripheral tissues. The polypeptide is Hemoglobin subunit alpha-1 (Naja naja (Indian cobra)).